The following is a 505-amino-acid chain: DDB1- and CUL4-associated factor 17 (505 aa).

Helical transmembrane passes span 186 to 206 and 222 to 242; these read VLLYLAVFRVLPFSLVGILEI and GILIVMYSSGLVRLYSFQAII.

As to quaternary structure, interacts with DDB1, CUL4A and CUL4B.

It localises to the membrane. Its subcellular location is the nucleus. It is found in the nucleolus. It functions in the pathway protein modification; protein ubiquitination. May function as a substrate receptor for CUL4-DDB1 E3 ubiquitin-protein ligase complex. In Rattus norvegicus (Rat), this protein is DDB1- and CUL4-associated factor 17 (Dcaf17).